The primary structure comprises 79 residues: uncharacterized protein (79 aa).

This is an uncharacterized protein from Escherichia coli (Bacteriophage T4).